The following is a 182-amino-acid chain: Protein Syd (182 aa).

This sequence belongs to the Syd family.

It is found in the cell inner membrane. Interacts with the SecY protein in vivo. May bind preferentially to an uncomplexed state of SecY, thus functioning either as a chelating agent for excess SecY in the cell or as a regulatory factor that negatively controls the translocase function. This is Protein Syd from Pectobacterium atrosepticum (strain SCRI 1043 / ATCC BAA-672) (Erwinia carotovora subsp. atroseptica).